Consider the following 258-residue polypeptide: Tryptophan synthase alpha chain (258 aa).

Residues E47 and D58 each act as proton acceptor in the active site.

This sequence belongs to the TrpA family. Tetramer of two alpha and two beta chains.

The catalysed reaction is (1S,2R)-1-C-(indol-3-yl)glycerol 3-phosphate + L-serine = D-glyceraldehyde 3-phosphate + L-tryptophan + H2O. The protein operates within amino-acid biosynthesis; L-tryptophan biosynthesis; L-tryptophan from chorismate: step 5/5. In terms of biological role, the alpha subunit is responsible for the aldol cleavage of indoleglycerol phosphate to indole and glyceraldehyde 3-phosphate. This chain is Tryptophan synthase alpha chain, found in Bacillus cereus (strain B4264).